Here is a 118-residue protein sequence, read N- to C-terminus: Non-specific lipid-transfer protein 5 (118 aa).

Positions 1-25 (MEGLLKLSTLVIVCMLVTAPMASEA) are cleaved as a signal peptide. 4 cysteine pairs are disulfide-bonded: Cys-29–Cys-76, Cys-39–Cys-53, Cys-54–Cys-100, and Cys-74–Cys-114.

It belongs to the plant LTP family.

Functionally, plant non-specific lipid-transfer proteins transfer phospholipids as well as galactolipids across membranes. May play a role in wax or cutin deposition in the cell walls of expanding epidermal cells and certain secretory tissues. This Arabidopsis thaliana (Mouse-ear cress) protein is Non-specific lipid-transfer protein 5 (LTP5).